A 230-amino-acid polypeptide reads, in one-letter code: MSELVVALDFKDAQSAIEMAEKVRGVAPWVKVGLELFCAEGPEIITRFKEMGFKVFVDLKFFDIPNTVKGAVRSATRAGADMLSLHALGGERMAVAAREGRAEGAGGEAGPLLMAITILTSMDEDDIPFPVPNGLGSAVLDLALASSQAGLDGVVCSGLEVEAIKEKCGKDFLALTPGIRPASVSDDQRRVVTPSQAVDRGSNFLVVGRPITGADDPAEAARRIVAEMNS.

Substrate contacts are provided by residues Asp9, Lys31, 58 to 67 (DLKFFDIPNT), Thr120, Arg180, Gln188, Gly208, and Arg209. The active-site Proton donor is Lys60.

Belongs to the OMP decarboxylase family. Type 1 subfamily. As to quaternary structure, homodimer.

The enzyme catalyses orotidine 5'-phosphate + H(+) = UMP + CO2. It participates in pyrimidine metabolism; UMP biosynthesis via de novo pathway; UMP from orotate: step 2/2. Functionally, catalyzes the decarboxylation of orotidine 5'-monophosphate (OMP) to uridine 5'-monophosphate (UMP). The polypeptide is Orotidine 5'-phosphate decarboxylase (Maridesulfovibrio salexigens (strain ATCC 14822 / DSM 2638 / NCIMB 8403 / VKM B-1763) (Desulfovibrio salexigens)).